A 154-amino-acid chain; its full sequence is Low molecular weight protein-tyrosine-phosphatase PtpA (154 aa).

C8 functions as the Nucleophile in the catalytic mechanism. Residue R14 is part of the active site. Catalysis depends on D120, which acts as the Proton donor.

The protein belongs to the low molecular weight phosphotyrosine protein phosphatase family. In terms of assembly, interacts with host CORO1A. Phosphorylations at Tyr-122 and Tyr-123 are essential for phosphatase activity.

The protein localises to the secreted. It carries out the reaction O-phospho-L-tyrosyl-[protein] + H2O = L-tyrosyl-[protein] + phosphate. Functionally, secreted tyrosine phosphatase that plays a critical role during infection as a bacterial effector protein that counteracts host defenses. Required for intramacrophage survival. The protein is Low molecular weight protein-tyrosine-phosphatase PtpA (ptpA) of Staphylococcus aureus (strain MSSA476).